Consider the following 183-residue polypeptide: SAGA-associated factor 11 homolog (183 aa).

The SGF11-type zinc-finger motif lies at 98-119; that stretch reads CSCPNCNRIVAASRFAPHLEKC. Positions 140–167 are disordered; that stretch reads GGNYFGADEDDEDDADWSGEKRKKKIAP. Positions 146 to 156 are enriched in acidic residues; that stretch reads ADEDDEDDADW.

This sequence belongs to the SGF11 family. Component of some SAGA transcription coactivator-HAT complexes. Within the SAGA complex, participates in a subcomplex of SAGA called the DUB module (deubiquitination module).

Its subcellular location is the nucleus. Functionally, component of the transcription regulatory histone acetylation (HAT) complex SAGA, a multiprotein complex that activates transcription by remodeling chromatin and mediating histone acetylation and deubiquitination. Within the SAGA complex, participates in a subcomplex that specifically deubiquitinates histone H2B. The SAGA complex is recruited to specific gene promoters by activators, where it is required for transcription. The chain is SAGA-associated factor 11 homolog from Culex quinquefasciatus (Southern house mosquito).